Here is a 384-residue protein sequence, read N- to C-terminus: 4-hydroxy-3-methylbut-2-en-1-yl diphosphate synthase (flavodoxin) 1 (384 aa).

[4Fe-4S] cluster contacts are provided by cysteine 281, cysteine 284, cysteine 316, and glutamate 323.

It belongs to the IspG family. [4Fe-4S] cluster is required as a cofactor.

It carries out the reaction (2E)-4-hydroxy-3-methylbut-2-enyl diphosphate + oxidized [flavodoxin] + H2O + 2 H(+) = 2-C-methyl-D-erythritol 2,4-cyclic diphosphate + reduced [flavodoxin]. It participates in isoprenoid biosynthesis; isopentenyl diphosphate biosynthesis via DXP pathway; isopentenyl diphosphate from 1-deoxy-D-xylulose 5-phosphate: step 5/6. In terms of biological role, converts 2C-methyl-D-erythritol 2,4-cyclodiphosphate (ME-2,4cPP) into 1-hydroxy-2-methyl-2-(E)-butenyl 4-diphosphate. This chain is 4-hydroxy-3-methylbut-2-en-1-yl diphosphate synthase (flavodoxin) 1, found in Streptomyces coelicolor (strain ATCC BAA-471 / A3(2) / M145).